A 317-amino-acid chain; its full sequence is Apolipoprotein E (317 aa).

The first 18 residues, 1-18 (MKVLWAALLVTFLAGCQA), serve as a signal peptide directing secretion. 8 repeat units span residues 80–101 (TLMD…EQLS), 102–123 (PVAE…ARLG), 124–145 (ADME…AMLG), 146–167 (QSTE…KRLL), 168–189 (RDAD…EGAE), 190–211 (RGVS…VRAA), 212–233 (TVGS…ERLR), and 234–255 (ARME…EQVA). The segment at 80–255 (TLMDETMKEL…RLDEVKEQVA (176 aa)) is 8 X 22 AA approximate tandem repeats. Met-143 is modified (methionine sulfoxide). Position 147 is a phosphoserine (Ser-147). Positions 158 to 168 (HLRKLRKRLLR) are LDL and other lipoprotein receptors binding. 162 to 165 (LRKR) lines the heparin pocket. A lipid-binding and lipoprotein association region spans residues 210–290 (AATVGSLAGQ…SWFEPLVEDM (81 aa)). 229-236 (GERLRARM) contributes to the heparin binding site. The tract at residues 266 to 317 (QQISLQAEAFQARLKSWFEPLVEDMQRQWAGLVEKVQAAVGASTAPVPSDNH) is homooligomerization. Residues 278–290 (RLKSWFEPLVEDM) are specificity for association with VLDL.

Belongs to the apolipoprotein A1/A4/E family. In terms of assembly, homotetramer. May interact with ABCA1; functionally associated with ABCA1 in the biogenesis of HDLs. May interact with APP/A4 amyloid-beta peptide; the interaction is extremely stable in vitro but its physiological significance is unclear. May interact with MAPT. May interact with MAP2. In the cerebrospinal fluid, interacts with secreted SORL1. Interacts with PMEL; this allows the loading of PMEL luminal fragment on ILVs to induce fibril nucleation. APOE exists as multiple glycosylated and sialylated glycoforms within cells and in plasma. The extent of glycosylation and sialylation are tissue and context specific. Post-translationally, glycated in plasma VLDL. In terms of processing, phosphorylated by FAM20C in the extracellular medium.

Its subcellular location is the secreted. It localises to the extracellular space. The protein resides in the extracellular matrix. It is found in the extracellular vesicle. The protein localises to the endosome. Its subcellular location is the multivesicular body. APOE is an apolipoprotein, a protein associating with lipid particles, that mainly functions in lipoprotein-mediated lipid transport between organs via the plasma and interstitial fluids. APOE is a core component of plasma lipoproteins and is involved in their production, conversion and clearance. Apolipoproteins are amphipathic molecules that interact both with lipids of the lipoprotein particle core and the aqueous environment of the plasma. As such, APOE associates with chylomicrons, chylomicron remnants, very low density lipoproteins (VLDL) and intermediate density lipoproteins (IDL) but shows a preferential binding to high-density lipoproteins (HDL). It also binds a wide range of cellular receptors including the LDL receptor/LDLR, the LDL receptor-related proteins LRP1, LRP2 and LRP8 and the very low-density lipoprotein receptor/VLDLR that mediate the cellular uptake of the APOE-containing lipoprotein particles. Finally, APOE also has a heparin-binding activity and binds heparan-sulfate proteoglycans on the surface of cells, a property that supports the capture and the receptor-mediated uptake of APOE-containing lipoproteins by cells. A main function of APOE is to mediate lipoprotein clearance through the uptake of chylomicrons, VLDLs, and HDLs by hepatocytes. APOE is also involved in the biosynthesis by the liver of VLDLs as well as their uptake by peripheral tissues ensuring the delivery of triglycerides and energy storage in muscle, heart and adipose tissues. By participating in the lipoprotein-mediated distribution of lipids among tissues, APOE plays a critical role in plasma and tissues lipid homeostasis. APOE is also involved in two steps of reverse cholesterol transport, the HDLs-mediated transport of cholesterol from peripheral tissues to the liver, and thereby plays an important role in cholesterol homeostasis. First, it is functionally associated with ABCA1 in the biogenesis of HDLs in tissues. Second, it is enriched in circulating HDLs and mediates their uptake by hepatocytes. APOE also plays an important role in lipid transport in the central nervous system, regulating neuron survival and sprouting. This Colobus guereza (Mantled guereza) protein is Apolipoprotein E (APOE).